The chain runs to 236 residues: Probable chemoreceptor glutamine deamidase CheD (236 aa).

A disordered region spans residues 1 to 20 (MIEFGKRATPQSAADAVRGD).

Belongs to the CheD family.

The catalysed reaction is L-glutaminyl-[protein] + H2O = L-glutamyl-[protein] + NH4(+). Its function is as follows. Probably deamidates glutamine residues to glutamate on methyl-accepting chemotaxis receptors (MCPs), playing an important role in chemotaxis. The protein is Probable chemoreceptor glutamine deamidase CheD of Ralstonia pickettii (strain 12J).